The following is a 145-amino-acid chain: Small ribosomal subunit protein uS19 (145 aa).

N-acetylalanine is present on Ala-2. Lys-108 participates in a covalent cross-link: Glycyl lysine isopeptide (Lys-Gly) (interchain with G-Cter in SUMO2).

Belongs to the universal ribosomal protein uS19 family. In terms of assembly, component of the small ribosomal subunit.

The protein localises to the cytoplasm. Functionally, component of the small ribosomal subunit. The ribosome is a large ribonucleoprotein complex responsible for the synthesis of proteins in the cell. In Mesocricetus auratus (Golden hamster), this protein is Small ribosomal subunit protein uS19 (RPS15).